The sequence spans 114 residues: T cell receptor beta variable 6-4 (114 aa).

The first 21 residues, 1 to 21 (MSIRLLCCVAFSLLWAGPVTA), serve as a signal peptide directing secretion. The Ig-like domain occupies 22–114 (GITQAPTSQI…TSVYFCASSD (93 aa)). Cysteines 42 and 110 form a disulfide.

As to quaternary structure, alpha-beta TR is a heterodimer composed of an alpha and beta chain; disulfide-linked. The alpha-beta TR is associated with the transmembrane signaling CD3 coreceptor proteins to form the TR-CD3 (TcR or TCR). The assembly of alpha-beta TR heterodimers with CD3 occurs in the endoplasmic reticulum where a single alpha-beta TR heterodimer associates with one CD3D-CD3E heterodimer, one CD3G-CD3E heterodimer and one CD247 homodimer forming a stable octameric structure. CD3D-CD3E and CD3G-CD3E heterodimers preferentially associate with TR alpha and TR beta chains, respectively. The association of the CD247 homodimer is the last step of TcR assembly in the endoplasmic reticulum and is required for transport to the cell surface.

The protein resides in the cell membrane. Its function is as follows. V region of the variable domain of T cell receptor (TR) beta chain that participates in the antigen recognition. Alpha-beta T cell receptors are antigen specific receptors which are essential to the immune response and are present on the cell surface of T lymphocytes. Recognize peptide-major histocompatibility (MH) (pMH) complexes that are displayed by antigen presenting cells (APC), a prerequisite for efficient T cell adaptive immunity against pathogens. Binding of alpha-beta TR to pMH complex initiates TR-CD3 clustering on the cell surface and intracellular activation of LCK that phosphorylates the ITAM motifs of CD3G, CD3D, CD3E and CD247 enabling the recruitment of ZAP70. In turn ZAP70 phosphorylates LAT, which recruits numerous signaling molecules to form the LAT signalosome. The LAT signalosome propagates signal branching to three major signaling pathways, the calcium, the mitogen-activated protein kinase (MAPK) kinase and the nuclear factor NF-kappa-B (NF-kB) pathways, leading to the mobilization of transcription factors that are critical for gene expression and essential for T cell growth and differentiation. The T cell repertoire is generated in the thymus, by V-(D)-J rearrangement. This repertoire is then shaped by intrathymic selection events to generate a peripheral T cell pool of self-MH restricted, non-autoaggressive T cells. Post-thymic interaction of alpha-beta TR with the pMH complexes shapes TR structural and functional avidity. The polypeptide is T cell receptor beta variable 6-4 (Homo sapiens (Human)).